The primary structure comprises 983 residues: Isoleucine--tRNA ligase (983 aa).

Positions 61–71 (PYANGELHVGH) match the 'HIGH' region motif. Position 608 (Glu-608) interacts with L-isoleucyl-5'-AMP. The 'KMSKS' region signature appears at 649 to 653 (KMSKS). Lys-652 contacts ATP. The Zn(2+) site is built by Cys-952, Cys-955, Cys-972, and Cys-975.

It belongs to the class-I aminoacyl-tRNA synthetase family. IleS type 1 subfamily. As to quaternary structure, monomer. The cofactor is Zn(2+).

The protein localises to the cytoplasm. The enzyme catalyses tRNA(Ile) + L-isoleucine + ATP = L-isoleucyl-tRNA(Ile) + AMP + diphosphate. Functionally, catalyzes the attachment of isoleucine to tRNA(Ile). As IleRS can inadvertently accommodate and process structurally similar amino acids such as valine, to avoid such errors it has two additional distinct tRNA(Ile)-dependent editing activities. One activity is designated as 'pretransfer' editing and involves the hydrolysis of activated Val-AMP. The other activity is designated 'posttransfer' editing and involves deacylation of mischarged Val-tRNA(Ile). The sequence is that of Isoleucine--tRNA ligase from Gloeobacter violaceus (strain ATCC 29082 / PCC 7421).